A 280-amino-acid chain; its full sequence is 4-deoxy-L-threo-5-hexosulose-uronate ketol-isomerase 1 (280 aa).

Zn(2+)-binding residues include histidine 198, histidine 200, glutamate 205, and histidine 247.

This sequence belongs to the KduI family. It depends on Zn(2+) as a cofactor.

It carries out the reaction 5-dehydro-4-deoxy-D-glucuronate = 3-deoxy-D-glycero-2,5-hexodiulosonate. Its pathway is glycan metabolism; pectin degradation; 2-dehydro-3-deoxy-D-gluconate from pectin: step 4/5. Catalyzes the isomerization of 5-dehydro-4-deoxy-D-glucuronate to 3-deoxy-D-glycero-2,5-hexodiulosonate. This chain is 4-deoxy-L-threo-5-hexosulose-uronate ketol-isomerase 1 (kduI1), found in Rhizobium meliloti (strain 1021) (Ensifer meliloti).